Here is a 374-residue protein sequence, read N- to C-terminus: Regulator of G-protein signaling 20 (374 aa).

Polar residues predominate over residues 1–11 (MPRLSQDNQQG). Disordered regions lie at residues 1–21 (MPRL…RPSR) and 135–158 (PPGG…PPMG). Over residues 12–21 (HQKHFSRPSR) the composition is skewed to basic residues. Residues 248–364 (SFDKLMLTPA…MNSALYKDLL (117 aa)) enclose the RGS domain.

In terms of assembly, forms a complex with G(alpha)z/i2 subunits and mu-opioid receptors; the formation of this complex results in mu-opioid receptor desensitization. Interacts with OPRM1. Post-translationally, fatty acylated. Heavily palmitoylated in the cysteine string motif. In terms of processing, N- and O-glycosylated in synapsomal membranes. Serine phosphorylated in synapsomal membranes. Post-translationally, sumoylated with SUMO1 and SUMO2 in synaptosomes. The sumoylated forms act as a scaffold for sequestering mu-opioid receptor-activated G(alpha) subunits. Retinal-specific. Expressed throughout the retina, including photoreceptors.

The protein resides in the membrane. Its subcellular location is the nucleus. It is found in the cytoplasm. Functionally, inhibits signal transduction by increasing the GTPase activity of G protein alpha subunits thereby driving them into their inactive GDP-bound form. Binds selectively to G(z)-alpha and G(alpha)-i2 subunits, accelerates their GTPase activity and regulates their signaling activities. The G(z)-alpha activity is inhibited by the phosphorylation and palmitoylation of the G-protein. Negatively regulates mu-opioid receptor-mediated activation of the G-proteins. This Bos taurus (Bovine) protein is Regulator of G-protein signaling 20 (RGS20).